Here is a 553-residue protein sequence, read N- to C-terminus: Mannuronan C5-epimerase AlgE4 (553 aa).

8 PbH1 repeats span residues 133-155, 157-179, 180-202, 204-226, 234-256, 257-279, 280-301, and 320-342; these read DRDV…DPHE, TINL…VADY, LVDS…NVVT, THDF…VVQR, PSNI…LLKM, TSDI…RVYG, AQDV…AVPE, and TLNT…GIQE. Residues 367-427 are disordered; sequence YGPHSTVSGE…DILDGGAGRD (61 aa). Hemolysin-type calcium-binding repeat units follow at residues 403-420 and 421-438; these read QGGS…DDIL and DGGA…ADTF.

It belongs to the D-mannuronate C5-epimerase family. The cofactor is Ca(2+).

The protein localises to the secreted. The catalysed reaction is [(1-&gt;4)-beta-D-mannuronosyl](n) = [alginate](n). The protein operates within glycan biosynthesis; alginate biosynthesis. With respect to regulation, inhibited by zinc. In terms of biological role, converts beta-D-mannuronic acid (M) to alpha-L-guluronic acid (G), but introduces almost exclusively MG blocks, producing a polymer with non-gel-forming capacity. The polypeptide is Mannuronan C5-epimerase AlgE4 (Azotobacter vinelandii).